We begin with the raw amino-acid sequence, 493 residues long: MTDLTRLTIAEARAKLSAKEITAVELTDAYIGAIEAANETINAYVTVTPEKARAMAKASDARIAAGKAGALEGIPLGIKDLFGTEGVHTQACSHILDGFRPRYESTVTQNLWNDGAVMLGKLNMDEFAMGSSNETSYYGPVKNPWRAKGSNMDLVPGGSSGGSAAAVAAYLCAGATATDTGGSIRQPAAFTGTVGIKPTYGRCSRWGVVAFASSLDQAGPIARDVRDAAILLKSMASVDLKDTTSVDLPVPDYEASIGQSIKGMKIGIPKEYRVDGMPEEIEALWQQGIAWLKEAGAEIVDITLPHTKYALPAYYIVAPAEASSNLARYDGVRYGLRVDGKDIVDMYEKTRAAGFGREVKRRIMIGTYVLSAGYYDAYYLRAQKVRSLIKRDFELAFQAGVDAILTPATPSSAFGIADEDLASDPVKMYLNDIFTVTVNMAGLPGIAVPGGLDHKGLPLGLQLIGKPFDEETLFKTAHVIEQAAGRFAPSKWW.

Catalysis depends on charge relay system residues Lys79 and Ser159. Ser183 serves as the catalytic Acyl-ester intermediate.

It belongs to the amidase family. GatA subfamily. Heterotrimer of A, B and C subunits.

The catalysed reaction is L-glutamyl-tRNA(Gln) + L-glutamine + ATP + H2O = L-glutaminyl-tRNA(Gln) + L-glutamate + ADP + phosphate + H(+). In terms of biological role, allows the formation of correctly charged Gln-tRNA(Gln) through the transamidation of misacylated Glu-tRNA(Gln) in organisms which lack glutaminyl-tRNA synthetase. The reaction takes place in the presence of glutamine and ATP through an activated gamma-phospho-Glu-tRNA(Gln). The polypeptide is Glutamyl-tRNA(Gln) amidotransferase subunit A (Sinorhizobium fredii (strain NBRC 101917 / NGR234)).